The following is a 544-amino-acid chain: Serine/threonine-protein kinase PAK 1 (544 aa).

Residues 1–79 are disordered; it reads MSNNGLDVQD…KERPEISLPS (79 aa). N-acetylserine is present on serine 2. At serine 21 the chain carries Phosphoserine; by PKB and autocatalysis. The residue at position 57 (serine 57) is a Phosphoserine; by autocatalysis. The span at 68–79 shows a compositional bias: basic and acidic residues; the sequence is KEKERPEISLPS. Residues 70-140 are autoregulatory region; the sequence is KERPEISLPS…YNSKKTSNSQ (71 aa). Positions 75–88 constitute a CRIB domain; sequence ISLPSDFEHTIHVG. Positions 75 to 105 are GTPase-binding; it reads ISLPSDFEHTIHVGFDAVTGEFTGMPEQWAR. Phosphothreonine; by OXSR1 is present on threonine 84. A Phosphoserine modification is found at serine 115. Residues tyrosine 131 and tyrosine 142 each carry the phosphotyrosine modification. A phosphoserine; by autocatalysis mark is found at serine 144 and serine 149. Over residues 150–166 the composition is skewed to polar residues; that stretch reads AEDYNSSNTLNVKTVSE. The disordered stretch occupies residues 150–195; that stretch reads AEDYNSSNTLNVKTVSETPAVPPVSEDEDDDDDATPPPVIAPRPEH. Tyrosine 153 is modified (phosphotyrosine; by JAK2). Phosphoserine is present on serine 174. Acidic residues predominate over residues 174–183; that stretch reads SEDEDDDDDA. Threonine 184 carries the post-translational modification Phosphothreonine. Serine 198 carries the phosphoserine; by autocatalysis modification. Phosphotyrosine; by JAK2 is present on tyrosine 200. A Phosphoserine; by autocatalysis modification is found at serine 203. The tract at residues 209 to 250 is disordered; the sequence is PVTPTRDVATSPISPTENNTTPPDALTRNTEKQKKKPKMSDE. Threonine 211 and threonine 218 each carry phosphothreonine. A phosphoserine mark is found at serine 219 and serine 222. The segment covering 219 to 230 has biased composition (polar residues); it reads SPISPTENNTTP. A phosphothreonine mark is found at threonine 224, threonine 228, and threonine 229. The Protein kinase domain occupies 269-520; sequence YTRFEKIGQG…AKELLQHQFL (252 aa). 275–283 serves as a coordination point for ATP; sequence IGQGASGTV. Residue tyrosine 284 is modified to Phosphotyrosine; by JAK2. Position 298 (lysine 298) interacts with ATP. Aspartate 388 serves as the catalytic Proton acceptor. Threonine 422 carries the phosphothreonine; by autocatalysis, BRSK2 and PDPK1 modification.

The protein belongs to the protein kinase superfamily. STE Ser/Thr protein kinase family. STE20 subfamily. As to quaternary structure, homodimer in its autoinhibited state. Active as monomer. Interacts with GIT1. Component of cytoplasmic complexes, which also contains PXN, ARHGEF7 and GIT1. Interacts with NISCH. Interacts with DVL1; mediates the formation of a DVL1, MUSK and PAK1 ternary complex involved in AChR clustering. Binds to the caspase-cleaved p110 isoform of CDC2L1 and CDC2L2, p110C, but not the full-length proteins. Interacts with ARHGEF7. Interacts with SCRIB. Interacts with PDPK1. Interacts (via kinase domain) with RAF1. Interacts with NCK1 and NCK2. Interacts with TBCB. Interacts with BRSK2. Interacts tightly with GTP-bound but not GDP-bound CDC42/P21 and RAC1. Interacts with SNAI1. Interacts with CIB1 (via N-terminal region); the interaction is direct, promotes PAK1 activity and occurs in a calcium-dependent manner. Interacts with INPP5K. Interacts with gamma-tubulin. Interacts with RHOU; the interaction promotes PAK1 activation. Mg(2+) is required as a cofactor. Post-translationally, autophosphorylated in trans, meaning that in a dimer, one kinase molecule phosphorylates the other one. Activated by autophosphorylation at Thr-422 in response to a conformation change, triggered by interaction with GTP-bound CDC42 or RAC1. Activated by phosphorylation at Thr-422 by PDPK1. Phosphorylated by JAK2 in response to PRL; this increases PAK1 kinase activity. Phosphorylated at Ser-21 by PKB/AKT; this reduces interaction with NCK1 and association with focal adhesion sites. Activated by phosphorylation at Thr-422 by BRSK2. Upon DNA damage, phosphorylated at Thr-211 and translocates to the nucleoplasm. Phosphorylated at tyrosine residues, which can be enhanced by NTN1. Expressed predominantly in the brain, with higher expression in neuronal groups associated with motor function, and at lower levels in the spleen.

It is found in the cytoplasm. The protein localises to the cell junction. The protein resides in the focal adhesion. It localises to the cell projection. Its subcellular location is the lamellipodium. It is found in the cell membrane. The protein localises to the ruffle membrane. The protein resides in the invadopodium. It localises to the nucleus. Its subcellular location is the nucleoplasm. It is found in the chromosome. The protein localises to the cytoskeleton. The protein resides in the microtubule organizing center. It localises to the centrosome. It carries out the reaction L-seryl-[protein] + ATP = O-phospho-L-seryl-[protein] + ADP + H(+). It catalyses the reaction L-threonyl-[protein] + ATP = O-phospho-L-threonyl-[protein] + ADP + H(+). Phosphorylation of Thr-84 by OXSR1 inhibits activation. Activated by binding small G proteins. Binding of GTP-bound CDC42 or RAC1 to the autoregulatory region releases monomers from the autoinhibited dimer, and enables activation by phosphorylation of Thr-422. Its function is as follows. Protein kinase involved in intracellular signaling pathways downstream of integrins and receptor-type kinases that plays an important role in cytoskeleton dynamics, in cell adhesion, migration, proliferation, apoptosis, mitosis, and in vesicle-mediated transport processes. Can directly phosphorylate BAD and protects cells against apoptosis. Activated by interaction with CDC42 and RAC1. Functions as a GTPase effector that links the Rho-related GTPases CDC42 and RAC1 to the JNK MAP kinase pathway. Phosphorylates and activates MAP2K1, and thereby mediates activation of downstream MAP kinases. Involved in the reorganization of the actin cytoskeleton, actin stress fibers and of focal adhesion complexes. Phosphorylates the tubulin chaperone TBCB and thereby plays a role in the regulation of microtubule biogenesis and organization of the tubulin cytoskeleton. Plays a role in the regulation of insulin secretion in response to elevated glucose levels. Part of a ternary complex that contains PAK1, DVL1 and MUSK that is important for MUSK-dependent regulation of AChR clustering during the formation of the neuromuscular junction (NMJ). Activity is inhibited in cells undergoing apoptosis, potentially due to binding of CDC2L1 and CDC2L2. Phosphorylates MYL9/MLC2. Phosphorylates RAF1 at 'Ser-338' and 'Ser-339' resulting in: activation of RAF1, stimulation of RAF1 translocation to mitochondria, phosphorylation of BAD by RAF1, and RAF1 binding to BCL2. Phosphorylates SNAI1 at 'Ser-246' promoting its transcriptional repressor activity by increasing its accumulation in the nucleus. In podocytes, promotes NR3C2 nuclear localization. Required for atypical chemokine receptor ACKR2-induced phosphorylation of LIMK1 and cofilin (CFL1) and for the up-regulation of ACKR2 from endosomal compartment to cell membrane, increasing its efficiency in chemokine uptake and degradation. In synapses, seems to mediate the regulation of F-actin cluster formation performed by SHANK3, maybe through CFL1 phosphorylation and inactivation. Plays a role in RUFY3-mediated facilitating gastric cancer cells migration and invasion. In response to DNA damage, phosphorylates MORC2 which activates its ATPase activity and facilitates chromatin remodeling. In neurons, plays a crucial role in regulating GABA(A) receptor synaptic stability and hence GABAergic inhibitory synaptic transmission through its role in F-actin stabilization. In hippocampal neurons, necessary for the formation of dendritic spines and excitatory synapses; this function is dependent on kinase activity and may be exerted by the regulation of actomyosin contractility through the phosphorylation of myosin II regulatory light chain (MLC). Along with GIT1, positively regulates microtubule nucleation during interphase. Phosphorylates FXR1, promoting its localization to stress granules and activity. Phosphorylates ILK on 'Thr-173' and 'Ser-246', promoting nuclear export of ILK. The sequence is that of Serine/threonine-protein kinase PAK 1 from Rattus norvegicus (Rat).